Here is a 103-residue protein sequence, read N- to C-terminus: MQNQRIRIRLKAFDYRLIDQSTLEIVNTAKRTGAKVLGPIPLPTRKERFTILVSPHVNKDARDQYEIRTHKRLIDIVQPTEKTVDALMRLDLAAGVDVQISLG.

It belongs to the universal ribosomal protein uS10 family. As to quaternary structure, part of the 30S ribosomal subunit.

Its function is as follows. Involved in the binding of tRNA to the ribosomes. The sequence is that of Small ribosomal subunit protein uS10 from Buchnera aphidicola subsp. Cinara cedri (strain Cc).